Reading from the N-terminus, the 1343-residue chain is DNA-directed RNA polymerase subunit beta (1343 aa).

This sequence belongs to the RNA polymerase beta chain family. The RNAP catalytic core consists of 2 alpha, 1 beta, 1 beta' and 1 omega subunit. When a sigma factor is associated with the core the holoenzyme is formed, which can initiate transcription.

It carries out the reaction RNA(n) + a ribonucleoside 5'-triphosphate = RNA(n+1) + diphosphate. Its function is as follows. DNA-dependent RNA polymerase catalyzes the transcription of DNA into RNA using the four ribonucleoside triphosphates as substrates. The polypeptide is DNA-directed RNA polymerase subunit beta (Haemophilus influenzae (strain ATCC 51907 / DSM 11121 / KW20 / Rd)).